Reading from the N-terminus, the 115-residue chain is Large ribosomal subunit protein bL19 (115 aa).

It belongs to the bacterial ribosomal protein bL19 family.

This protein is located at the 30S-50S ribosomal subunit interface and may play a role in the structure and function of the aminoacyl-tRNA binding site. The protein is Large ribosomal subunit protein bL19 of Desulforudis audaxviator (strain MP104C).